A 253-amino-acid polypeptide reads, in one-letter code: uncharacterized protein (253 aa).

10 to 35 provides a ligand contact to NADP(+); it reads ISGAASKRGIGRATAELFASHGARVA. A substrate-binding site is contributed by S144. Y159 serves as the catalytic Proton acceptor.

It belongs to the short-chain dehydrogenases/reductases (SDR) family.

This is an uncharacterized protein from Sinorhizobium fredii (strain NBRC 101917 / NGR234).